The sequence spans 241 residues: Phosphoribosylformylglycinamidine synthase subunit PurQ (241 aa).

One can recognise a Glutamine amidotransferase type-1 domain in the interval 6–241; that stretch reads NVGIVVFPGS…QSLLLASAFA (236 aa). Cys90 serves as the catalytic Nucleophile. Residues His207 and Glu209 contribute to the active site.

As to quaternary structure, part of the FGAM synthase complex composed of 1 PurL, 1 PurQ and 2 PurS subunits.

It is found in the cytoplasm. The catalysed reaction is N(2)-formyl-N(1)-(5-phospho-beta-D-ribosyl)glycinamide + L-glutamine + ATP + H2O = 2-formamido-N(1)-(5-O-phospho-beta-D-ribosyl)acetamidine + L-glutamate + ADP + phosphate + H(+). It carries out the reaction L-glutamine + H2O = L-glutamate + NH4(+). Its pathway is purine metabolism; IMP biosynthesis via de novo pathway; 5-amino-1-(5-phospho-D-ribosyl)imidazole from N(2)-formyl-N(1)-(5-phospho-D-ribosyl)glycinamide: step 1/2. Functionally, part of the phosphoribosylformylglycinamidine synthase complex involved in the purines biosynthetic pathway. Catalyzes the ATP-dependent conversion of formylglycinamide ribonucleotide (FGAR) and glutamine to yield formylglycinamidine ribonucleotide (FGAM) and glutamate. The FGAM synthase complex is composed of three subunits. PurQ produces an ammonia molecule by converting glutamine to glutamate. PurL transfers the ammonia molecule to FGAR to form FGAM in an ATP-dependent manner. PurS interacts with PurQ and PurL and is thought to assist in the transfer of the ammonia molecule from PurQ to PurL. The protein is Phosphoribosylformylglycinamidine synthase subunit PurQ of Thermosynechococcus vestitus (strain NIES-2133 / IAM M-273 / BP-1).